Reading from the N-terminus, the 626-residue chain is Chaperone protein DnaK (626 aa).

Residue T197 is modified to Phosphothreonine; by autocatalysis. 2 stretches are compositionally biased toward basic and acidic residues: residues 512–528 and 539–551; these read DAEA…EAVE and QTEK…GEKI. 2 disordered regions span residues 512-551 and 601-626; these read DAEA…GEKI and DQNA…AEVE.

This sequence belongs to the heat shock protein 70 family.

Its function is as follows. Acts as a chaperone. In Campylobacter fetus subsp. fetus (strain 82-40), this protein is Chaperone protein DnaK.